Reading from the N-terminus, the 85-residue chain is UPF0512 protein U (85 aa).

Belongs to the UPF0512 family.

This Dictyostelium discoideum (Social amoeba) protein is UPF0512 protein U.